We begin with the raw amino-acid sequence, 1288 residues long: 5-oxoprolinase (1288 aa).

Thr-151 is modified (phosphothreonine). The interval 1249-1269 is disordered; sequence GGGGYGDPEDPAPLPGSPLQP. Ser-1265 bears the Phosphoserine mark.

This sequence belongs to the oxoprolinase family. In terms of assembly, homodimer. In terms of tissue distribution, expressed in coronary artery and kidney.

It localises to the cytoplasm. The protein resides in the cytosol. It catalyses the reaction 5-oxo-L-proline + ATP + 2 H2O = L-glutamate + ADP + phosphate + H(+). Catalyzes the cleavage of 5-oxo-L-proline to form L-glutamate coupled to the hydrolysis of ATP to ADP and inorganic phosphate. The sequence is that of 5-oxoprolinase (OPLAH) from Bos taurus (Bovine).